A 475-amino-acid polypeptide reads, in one-letter code: Dihydrolipoyl dehydrogenase (475 aa).

FAD is bound by residues 39–47, Lys-56, and Ala-118; that span reads EKDAYGGTC. A disulfide bond links Cys-47 and Cys-52. NAD(+)-binding positions include 186 to 190, Glu-209, and 275 to 278; these read GGGYI and AVGR. FAD-binding residues include Asp-318 and Ala-327. The active-site Proton acceptor is His-451.

Belongs to the class-I pyridine nucleotide-disulfide oxidoreductase family. Homodimer. Requires FAD as cofactor.

The protein localises to the cytoplasm. It carries out the reaction N(6)-[(R)-dihydrolipoyl]-L-lysyl-[protein] + NAD(+) = N(6)-[(R)-lipoyl]-L-lysyl-[protein] + NADH + H(+). The polypeptide is Dihydrolipoyl dehydrogenase (lpdA) (Haloferax volcanii (strain ATCC 29605 / DSM 3757 / JCM 8879 / NBRC 14742 / NCIMB 2012 / VKM B-1768 / DS2) (Halobacterium volcanii)).